A 63-amino-acid chain; its full sequence is Large ribosomal subunit protein uL29 (63 aa).

This sequence belongs to the universal ribosomal protein uL29 family.

The sequence is that of Large ribosomal subunit protein uL29 from Yersinia pseudotuberculosis serotype O:1b (strain IP 31758).